The sequence spans 132 residues: Ragulator complex protein LAMTOR3 homolog (132 aa).

This sequence belongs to the LAMTOR3 family. In terms of assembly, part of the Ragulator complex.

In terms of biological role, regulator of the TOR pathway, a signaling cascade that promotes cell growth in response to growth factors, energy levels, and amino acids. May activate the TOR signaling cascade in response to amino acids. The protein is Ragulator complex protein LAMTOR3 homolog of Dictyostelium discoideum (Social amoeba).